Here is a 74-residue protein sequence, read N- to C-terminus: ATP synthase subunit c (74 aa).

2 helical membrane-spanning segments follow: residues 13-33 (ISVI…ASLI) and 51-71 (ILGF…AFLI).

This sequence belongs to the ATPase C chain family. F-type ATPases have 2 components, F(1) - the catalytic core - and F(0) - the membrane proton channel. F(1) has five subunits: alpha(3), beta(3), gamma(1), delta(1), epsilon(1). F(0) has three main subunits: a(1), b(2) and c(10-14). The alpha and beta chains form an alternating ring which encloses part of the gamma chain. F(1) is attached to F(0) by a central stalk formed by the gamma and epsilon chains, while a peripheral stalk is formed by the delta and b chains.

The protein localises to the cell inner membrane. In terms of biological role, f(1)F(0) ATP synthase produces ATP from ADP in the presence of a proton or sodium gradient. F-type ATPases consist of two structural domains, F(1) containing the extramembraneous catalytic core and F(0) containing the membrane proton channel, linked together by a central stalk and a peripheral stalk. During catalysis, ATP synthesis in the catalytic domain of F(1) is coupled via a rotary mechanism of the central stalk subunits to proton translocation. Key component of the F(0) channel; it plays a direct role in translocation across the membrane. A homomeric c-ring of between 10-14 subunits forms the central stalk rotor element with the F(1) delta and epsilon subunits. The polypeptide is ATP synthase subunit c (Granulibacter bethesdensis (strain ATCC BAA-1260 / CGDNIH1)).